A 632-amino-acid chain; its full sequence is Probable membrane transporter protein MamO (632 aa).

Residues 25 to 45 (APVSILAFLILVTFAWGAYLL) form a helical membrane-spanning segment. Positions 78-268 (LYYTVPPAVV…VIVSHLQDVV (191 aa)) are protease-like. 2 residues coordinate a divalent metal cation: H148 and H263. 7 consecutive transmembrane segments (helical) span residues 340–360 (IGGYSIADILGLGMLALAAGV), 412–432 (LVQWDKVKPLIPWGVAGVVIG), 434–454 (FIGNAIGDSVVGVLLGLFALI), 513–533 (AVLGLPMGLFSGILGISGGVI), 550–570 (IANSSVLVFWASVAGSVVAFI), 582–602 (APVTLALVMIPGAYVGGILGA), and 612–632 (VLKGIYAATMAAIAIKMLTTV). The segment at 365 to 632 (MTMGGGVLQV…AIAIKMLTTV (268 aa)) is TSUP-like.

This sequence in the N-terminal section; belongs to the peptidase S1C family. It in the C-terminal section; belongs to the 4-toluene sulfonate uptake permease (TSUP) (TC 2.A.102) family. A metal cation serves as cofactor. Post-translationally, subject to proteolytic cleavage by MamE.

The protein resides in the magnetosome membrane. In terms of biological role, plays 2 roles; promotes magnetite nucleation/formation and activates the MamE protease. Despite its near conservation of a protease-like sequence, this is probably not a protease. Required in conjunction with MamP for proteolysis of at least MamE, itself and MamP. May transport a solute that controls MamE's protease activity. May place individual iron atoms into the magnetite lattice. One of 7 genes (mamLQBIEMO) able to induce magnetosome membrane biogenesis; coexpression of mamLQRBIEMO in a deletion of the 17 gene mamAB operon restores magnetosome vesicle formation but not magnetite biosynthesis. The sequence is that of Probable membrane transporter protein MamO from Magnetospirillum gryphiswaldense (strain DSM 6361 / JCM 21280 / NBRC 15271 / MSR-1).